A 130-amino-acid polypeptide reads, in one-letter code: YopE regulator (130 aa).

Its function is as follows. Positive regulator of YopE. The protein is YopE regulator (yerA) of Yersinia enterocolitica serotype O:8 / biotype 1B (strain NCTC 13174 / 8081).